The following is a 464-amino-acid chain: Molybdate transporter 2 (464 aa).

Positions 8–9 (LL) match the Tonoplast targeting signal motif. Transmembrane regions (helical) follow at residues 33 to 53 (LSGA…LTLV), 62 to 82 (LIFT…PMPV), 116 to 136 (LLLG…LPVV), 172 to 192 (IWLG…IILS), 223 to 243 (LLSS…LCFI), 309 to 329 (VSIS…MPVC), 348 to 368 (SVIF…NSFV), 374 to 394 (FPIG…AMAS), and 404 to 424 (FIML…LGFG).

This sequence belongs to the SLC26A/SulP transporter (TC 2.A.53) family. Expressed in leaves. Not detected in roots, shoots and seeds.

Its subcellular location is the vacuole membrane. Functionally, molybdate transporter required for vacuolar molybdate export during senescence. In Arabidopsis thaliana (Mouse-ear cress), this protein is Molybdate transporter 2 (MOT2).